The chain runs to 442 residues: Putative nucleotide-sugar transporter YMD8 (442 aa).

Topologically, residues 1–3 (MNR) are cytoplasmic. The helical transmembrane segment at 4–24 (TVFLAFVFGWYFCSIALSIYN) threads the bilayer. Residues 25 to 32 (RWMFDPKD) lie on the Extracellular side of the membrane. Residues 33–53 (GLGIGYPVLVTTFHQATLWLL) traverse the membrane as a helical segment. The Cytoplasmic portion of the chain corresponds to 54–76 (SGIYIKLRHKPVKNVLRKNNGFN). The chain crosses the membrane as a helical span at residues 77 to 97 (WSFFLKFLLPTAVASAGDIGL). Over 98–107 (SNVSFQYVPL) the chain is Extracellular. The N-linked (GlcNAc...) asparagine glycan is linked to N99. Residues 108–128 (TIYTIIKSSSIAFVLLFGCIF) traverse the membrane as a helical segment. Residues 129–132 (KLEK) are Cytoplasmic-facing. Residues 133–153 (FHWKLALSVIIMFVGVALMVF) traverse the membrane as a helical segment. Residues 154–166 (KPSDSTSTKNDQA) lie on the Extracellular side of the membrane. Residues 167–187 (LVIFGSFLVLASSCLSGLRWV) traverse the membrane as a helical segment. Over 188 to 254 (YTQLMLRNNP…PIHTIHQLAP (67 aa)) the chain is Cytoplasmic. S209 is subject to Phosphoserine. A helical membrane pass occupies residues 255–275 (IMGITLLLTSLLVEKPFPGIF). At 276-301 (SSSIFRLDTSNGGVGTETTVLSIVRG) the chain is on the extracellular side. Residues 302–322 (IVLLILPGFAVFLLTICEFSI) traverse the membrane as a helical segment. Topologically, residues 323-329 (LEQTPVL) are cytoplasmic. A helical membrane pass occupies residues 330–350 (TVSIVGIVKELLTVIFGIIIL). Topologically, residues 351–355 (SERLS) are extracellular. The chain crosses the membrane as a helical span at residues 356–376 (GFYNWLGMLIIMADVCYYNYF). Residues 377-442 (RYKQDLLQKY…QNVSRSSQQV (66 aa)) lie on the Cytoplasmic side of the membrane.

The protein belongs to the TPT transporter family. SLC35C subfamily.

The protein localises to the golgi apparatus membrane. It localises to the cytoplasmic vesicle. It is found in the COPI-coated vesicle membrane. The sequence is that of Putative nucleotide-sugar transporter YMD8 (YMD8) from Saccharomyces cerevisiae (strain ATCC 204508 / S288c) (Baker's yeast).